The sequence spans 132 residues: Translation initiation factor 5A (132 aa).

Hypusine is present on K36.

The protein belongs to the eIF-5A family.

The protein localises to the cytoplasm. Functionally, functions by promoting the formation of the first peptide bond. This chain is Translation initiation factor 5A (eIF5A), found in Caldivirga maquilingensis (strain ATCC 700844 / DSM 13496 / JCM 10307 / IC-167).